Consider the following 429-residue polypeptide: Adenylosuccinate synthetase (429 aa).

GTP is bound by residues 12 to 18 and 40 to 42; these read GDEGKGK and GHT. Asp-13 functions as the Proton acceptor in the catalytic mechanism. 2 residues coordinate Mg(2+): Asp-13 and Gly-40. Residues 13–16, 38–41, Thr-128, Arg-142, Gln-223, Thr-238, and Arg-302 contribute to the IMP site; these read DEGK and NAGH. His-41 acts as the Proton donor in catalysis. 298 to 304 contacts substrate; that stretch reads VNTGRPR. GTP is bound by residues Arg-304, 330–332, and 412–414; these read KLD and GVG.

The protein belongs to the adenylosuccinate synthetase family. As to quaternary structure, homodimer. Requires Mg(2+) as cofactor.

It is found in the cytoplasm. It carries out the reaction IMP + L-aspartate + GTP = N(6)-(1,2-dicarboxyethyl)-AMP + GDP + phosphate + 2 H(+). Its pathway is purine metabolism; AMP biosynthesis via de novo pathway; AMP from IMP: step 1/2. Plays an important role in the de novo pathway of purine nucleotide biosynthesis. Catalyzes the first committed step in the biosynthesis of AMP from IMP. The protein is Adenylosuccinate synthetase of Kocuria rhizophila (strain ATCC 9341 / DSM 348 / NBRC 103217 / DC2201).